The sequence spans 215 residues: Large ribosomal subunit protein uL16 (215 aa).

The protein belongs to the universal ribosomal protein uL16 family. In terms of assembly, component of the small ribosomal subunit. Mature ribosomes consist of a small (40S) and a large (60S) subunit. The 40S subunit contains about 33 different proteins and 1 molecule of RNA (18S). The 60S subunit contains about 49 different proteins and 3 molecules of RNA (25S, 5.8S and 5S).

The polypeptide is Large ribosomal subunit protein uL16 (RPL10) (Euglena gracilis).